The following is a 157-amino-acid chain: Mannose-specific lectin (157 aa).

The segment at residues 1–19 (MAKASLLILAAIFLGVITP) is a signal peptide (or 23; in 70% of the molecules). The Bulb-type lectin domain maps to 24 to 132 (DNILYSGETL…DRWATGTHTG (109 aa)). Residues glutamine 49, aspartate 51, asparagine 53, tyrosine 57, aspartate 60, lysine 61, tryptophan 64, alanine 65, asparagine 67, glutamine 80, aspartate 82, asparagine 84, tyrosine 88, isoleucine 95, tryptophan 96, asparagine 99, asparagine 106, glutamine 112, aspartate 114, asparagine 116, tyrosine 120, and tryptophan 125 each contribute to the alpha-D-mannopyranose site. The cysteines at positions 52 and 75 are disulfide-linked. A propeptide spans 129 to 157 (THTGLVGIPASPPSEKYPTAGKIKLVTAK) (removed in mature form).

In terms of assembly, homotetramer.

It localises to the secreted. Its function is as follows. Mannose-specific lectin which binds alpha-D-linked mannose. Displays a high affinity for alpha-(1-3)-mannose oligomers. Displays antiviral activity and therefore may contribute to defense against infections. The protein is Mannose-specific lectin of Galanthus nivalis (Common snowdrop).